Consider the following 126-residue polypeptide: Probable flagellum biosynthesis repressor protein FlbT (126 aa).

The protein belongs to the FlbT family.

Functionally, has a post-transcriptional repressor function in flagellum biogenesis. Associates with the 5'-UTR of fljK mRNA and promotes its degradation. The protein is Probable flagellum biosynthesis repressor protein FlbT of Rhodopseudomonas palustris (strain ATCC BAA-98 / CGA009).